Consider the following 350-residue polypeptide: RNA 3'-terminal phosphate cyclase (350 aa).

Residues glutamine 100 and 290–294 contribute to the ATP site; that span reads FLGDQ. Histidine 314 acts as the Tele-AMP-histidine intermediate in catalysis.

It belongs to the RNA 3'-terminal cyclase family. Type 1 subfamily.

The protein localises to the cytoplasm. It carries out the reaction a 3'-end 3'-phospho-ribonucleotide-RNA + ATP = a 3'-end 2',3'-cyclophospho-ribonucleotide-RNA + AMP + diphosphate. Functionally, catalyzes the conversion of 3'-phosphate to a 2',3'-cyclic phosphodiester at the end of RNA. The mechanism of action of the enzyme occurs in 3 steps: (A) adenylation of the enzyme by ATP; (B) transfer of adenylate to an RNA-N3'P to produce RNA-N3'PP5'A; (C) and attack of the adjacent 2'-hydroxyl on the 3'-phosphorus in the diester linkage to produce the cyclic end product. The biological role of this enzyme is unknown but it is likely to function in some aspects of cellular RNA processing. The sequence is that of RNA 3'-terminal phosphate cyclase from Thermococcus sibiricus (strain DSM 12597 / MM 739).